We begin with the raw amino-acid sequence, 331 residues long: Pectinesterase (331 aa).

The signal sequence occupies residues 1-17; it reads MVKSILASVLFAATALA. Residue glutamine 138 participates in substrate binding. The active-site Proton donor is the aspartate 161. Aspartate 182 acts as the Nucleophile in catalysis. Positions 247 and 249 each coordinate substrate.

This sequence belongs to the pectinesterase family.

It is found in the secreted. It catalyses the reaction [(1-&gt;4)-alpha-D-galacturonosyl methyl ester](n) + n H2O = [(1-&gt;4)-alpha-D-galacturonosyl](n) + n methanol + n H(+). The protein operates within glycan metabolism; pectin degradation; 2-dehydro-3-deoxy-D-gluconate from pectin: step 1/5. Its function is as follows. Involved in maceration and soft-rotting of plant tissue. The sequence is that of Pectinesterase (pme1) from Aspergillus niger.